Reading from the N-terminus, the 358-residue chain is MATDNDSFPWDQDSILSSDMFSATSTELCYENLNRSCVRSPYSPGPRLILYAVFGFGAALAVCGNLLVMTSILHFRQLHSPANFLVVSLACADFLVGLTVMPFSTVRSVEGCWYFGESYCKLHTCFDVSFCYCSIFHLCFISVDRYIAVSDPLTYPTRFTAFVSGKCITFSWLLSTIYGFSLLYTGANEAGLEDLVSALTCVGGCQLAVNQSWVFINFLLFLIPTLVMITVYSKIFLIAKQQAQNIEKMSKQTARASDSYKDRVAKRERKAAKTLGIAVAAFLLSWLPYFIDSIIDAFLGFITPTYVYEILVWIAYYNSAMNPLIYAFFYPWFRKAIKLIVSGKVLRENSSTTNLFPE.

At 1–47 (MATDNDSFPWDQDSILSSDMFSATSTELCYENLNRSCVRSPYSPGPR) the chain is on the extracellular side. Asparagine 5 and asparagine 34 each carry an N-linked (GlcNAc...) asparagine glycan. Intrachain disulfides connect cysteine 37-cysteine 201 and cysteine 120-cysteine 205. The chain crosses the membrane as a helical span at residues 48-68 (LILYAVFGFGAALAVCGNLLV). At 69-83 (MTSILHFRQLHSPAN) the chain is on the cytoplasmic side. The helical transmembrane segment at 84–104 (FLVVSLACADFLVGLTVMPFS) threads the bilayer. Residues 105-121 (TVRSVEGCWYFGESYCK) are Extracellular-facing. A helical transmembrane segment spans residues 122-143 (LHTCFDVSFCYCSIFHLCFISV). At 144–166 (DRYIAVSDPLTYPTRFTAFVSGK) the chain is on the cytoplasmic side. A helical membrane pass occupies residues 167 to 187 (CITFSWLLSTIYGFSLLYTGA). Residues 188 to 212 (NEAGLEDLVSALTCVGGCQLAVNQS) lie on the Extracellular side of the membrane. N-linked (GlcNAc...) asparagine glycosylation occurs at asparagine 210. A helical membrane pass occupies residues 213 to 233 (WVFINFLLFLIPTLVMITVYS). Residues 234-274 (KIFLIAKQQAQNIEKMSKQTARASDSYKDRVAKRERKAAKT) are Cytoplasmic-facing. A helical transmembrane segment spans residues 275 to 295 (LGIAVAAFLLSWLPYFIDSII). Residues 296-309 (DAFLGFITPTYVYE) are Extracellular-facing. The helical transmembrane segment at 310–333 (ILVWIAYYNSAMNPLIYAFFYPWF) threads the bilayer. Residues 334 to 358 (RKAIKLIVSGKVLRENSSTTNLFPE) lie on the Cytoplasmic side of the membrane.

Belongs to the G-protein coupled receptor 1 family. As to expression, specifically expressed in neurons of the olfactory epithelium.

The protein resides in the cell membrane. Functionally, olfactory receptor specific for N,N-dimethylalkylamines trace amines, such as N,N-dimethylcyclohexylamine. Trace amine compounds are enriched in animal body fluids and act on trace amine-associated receptors (TAARs) to elicit both intraspecific and interspecific innate behaviors. Ligand-binding causes a conformation change that triggers signaling via G(s)-class of G alpha proteins (GNAL or GNAS). The sequence is that of Trace amine-associated receptor 7b from Mus musculus (Mouse).